We begin with the raw amino-acid sequence, 160 residues long: Ribosomal RNA large subunit methyltransferase H (160 aa).

S-adenosyl-L-methionine is bound by residues leucine 77, glycine 109, and 128-133; that span reads FSRLTF.

The protein belongs to the RNA methyltransferase RlmH family. In terms of assembly, homodimer.

It localises to the cytoplasm. The catalysed reaction is pseudouridine(1915) in 23S rRNA + S-adenosyl-L-methionine = N(3)-methylpseudouridine(1915) in 23S rRNA + S-adenosyl-L-homocysteine + H(+). Functionally, specifically methylates the pseudouridine at position 1915 (m3Psi1915) in 23S rRNA. The sequence is that of Ribosomal RNA large subunit methyltransferase H from Desulfitobacterium hafniense (strain DSM 10664 / DCB-2).